The sequence spans 144 residues: Superoxide dismutase [Mn], mitochondrial (144 aa).

Mn(2+)-binding residues include His10, His58, and Asp143.

This sequence belongs to the iron/manganese superoxide dismutase family. In terms of assembly, homotetramer. It depends on Mn(2+) as a cofactor.

It localises to the mitochondrion matrix. The catalysed reaction is 2 superoxide + 2 H(+) = H2O2 + O2. Its function is as follows. Destroys superoxide anion radicals which are normally produced within the cells and which are toxic to biological systems. The protein is Superoxide dismutase [Mn], mitochondrial of Branchiostoma floridae (Florida lancelet).